The primary structure comprises 623 residues: MESKVRGEEERQKVERLVEKLKVHNNNNNRSSTPAHISFVPNSIVVSSRKLAAAFWEFHQYHYKDEEDCSYSYLSSASAKMHRGPNGFAGASSRRQRHGKAVAVKENGLDLSQFLRDPSPDHQPDSAGSLRRQIGQMLIKHHQSIDRNNHALQPVSPASYGSSLEVTTYNKAVTPSSSLEFRGRPSREPHYNLKTSTELLKVLNRIWSLEEQHVSNISLIKALKTEVAHSRVRIKELLRYQQADRHELDSVVKQLAEEKLLSKNKEVERMSSAVQSVRKALEDERKLRKRSESLHRKMARELSEVKSSLSNCVKELERGSKSNKMMELLCDEFAKGIKSYEEEIHGLKKKNLDKDWAGRGGGDQLVLHIAESWLDERMQMRLEGGDTLNGKNRSVLDKLEVEIETFLQEKRNEIPRNRRNSLESVPFNTLSAPPRDVDCEEDSGGSDSNCFELKKPAESYGDETKKPNQHNKDGSIDEKPKSPSSFQVNFEDQMAWALSSNGKKKTTRAIEDEEEEEDVKPENSNNNKKPENECATTNKNDVMGEMIRTHRRLLSETREIDEASCNFPSSRRQASPVRQWISRTVAPDLLGPSEIAIAHGVKDNTLKTKLANSSKSRLRLFKG.

A coiled-coil region spans residues 256–351; it reads AEEKLLSKNK…EEIHGLKKKN (96 aa). Disordered regions lie at residues 417 to 485 and 497 to 536; these read NRRN…SPSS and ALSS…ECAT. Positions 422-431 are enriched in polar residues; it reads LESVPFNTLS. The span at 452–481 shows a compositional bias: basic and acidic residues; that stretch reads ELKKPAESYGDETKKPNQHNKDGSIDEKPK.

This is an uncharacterized protein from Arabidopsis thaliana (Mouse-ear cress).